We begin with the raw amino-acid sequence, 59 residues long: Large ribosomal subunit protein uL30 (59 aa).

The protein belongs to the universal ribosomal protein uL30 family. In terms of assembly, part of the 50S ribosomal subunit.

This chain is Large ribosomal subunit protein uL30, found in Alkaliphilus oremlandii (strain OhILAs) (Clostridium oremlandii (strain OhILAs)).